A 258-amino-acid polypeptide reads, in one-letter code: UPF0246 protein Pnap_3166 (258 aa).

Belongs to the UPF0246 family.

This chain is UPF0246 protein Pnap_3166, found in Polaromonas naphthalenivorans (strain CJ2).